Here is a 790-residue protein sequence, read N- to C-terminus: Vacuolar protein sorting-associated protein 35B (790 aa).

The protein belongs to the VPS35 family. As to quaternary structure, component of the retromer complex which consists of VPS29 (MAG1), VPS26 (VPS26A or VPS26B), VPS35 (VPS35A or VPS35B or VPS35C), VPS5/17 (SNX1 or SNX2A or SNX2B). Component of a retromer subcomplex consisting of VPS29 (MAG1), VPS26 (VPS26A or VPS26B), VPS35 (VPS35A or VPS35B or VPS35C). Expressed in siliques and maturing seeds (at protein level).

It is found in the cytoplasm. The protein localises to the endosome membrane. It localises to the prevacuolar compartment membrane. Its subcellular location is the golgi apparatus. The protein resides in the trans-Golgi network membrane. In terms of biological role, plays a role in vesicular protein sorting. Component of the membrane-associated retromer complex which is essential in endosome-to-Golgi retrograde transport. Also involved in the efficient sorting of seed storage proteins globulin 12S and albumin 2S. The VPS29-VPS26-VPS35 subcomplex may be involved in recycling of specific cargos from endosome to the plasma membrane. This is Vacuolar protein sorting-associated protein 35B (VPS35B) from Arabidopsis thaliana (Mouse-ear cress).